The primary structure comprises 370 residues: Gametogenetin-binding protein 1 (370 aa).

Disordered stretches follow at residues 26 to 114 (VGSK…QTLT) and 240 to 263 (PAAP…EEAV). A compositionally biased stretch (polar residues) spans 31–49 (GSKSTNKPLTRSQPSSSWE). A required for induction of mitochondrial fragmentation region spans residues 225–370 (LYKQLQKSAM…DEMGNWPPPD (146 aa)). Basic and acidic residues predominate over residues 250–260 (GLPHEEKGERE). The segment at 298 to 370 (KKFRSTDTVG…DEMGNWPPPD (73 aa)) is interaction with GGN.

As to quaternary structure, interacts with CCDC159. Interacts with isoform 1 and isoform 2 of GGN. In terms of tissue distribution, testis-specific. In the testis, expressed only in germ cells and not in somatic cells. Expression starts in late primary spermatocytes in stage X-XII tubules and gradually increases towards step 1-3 spermatids in stage I-III tubules. Expression then declines continuously and disappears after step 7 spermatids in stage VII tubules (at protein level).

Its subcellular location is the cytoplasm. It localises to the membrane. The protein resides in the golgi apparatus. The protein localises to the mitochondrion intermembrane space. Its function is as follows. Induces mitochondrial fragmentation, possibly by promoting DNM1L-dependent fission and may play a role in mitochondrial morphogenesis during spermatogenesis. In Mus musculus (Mouse), this protein is Gametogenetin-binding protein 1 (Ggnbp1).